We begin with the raw amino-acid sequence, 432 residues long: Enolase (432 aa).

Gln167 contacts (2R)-2-phosphoglycerate. Glu209 serves as the catalytic Proton donor. Mg(2+) is bound by residues Asp246, Glu291, and Asp318. The (2R)-2-phosphoglycerate site is built by Lys343, Arg372, Ser373, and Lys394. Catalysis depends on Lys343, which acts as the Proton acceptor.

The protein belongs to the enolase family. As to quaternary structure, component of the RNA degradosome, a multiprotein complex involved in RNA processing and mRNA degradation. Mg(2+) is required as a cofactor.

It is found in the cytoplasm. The protein localises to the secreted. Its subcellular location is the cell surface. The catalysed reaction is (2R)-2-phosphoglycerate = phosphoenolpyruvate + H2O. Its pathway is carbohydrate degradation; glycolysis; pyruvate from D-glyceraldehyde 3-phosphate: step 4/5. Its function is as follows. Catalyzes the reversible conversion of 2-phosphoglycerate (2-PG) into phosphoenolpyruvate (PEP). It is essential for the degradation of carbohydrates via glycolysis. In Aliivibrio salmonicida (strain LFI1238) (Vibrio salmonicida (strain LFI1238)), this protein is Enolase.